Here is a 1409-residue protein sequence, read N- to C-terminus: MKTLDLYGYTSIAQSFDKICISIASPESIRAMSYGEIKDISTTNYRTFKVEKGGLFCPKIFGPVNDDECLCGKYRKKRYRGIVCEKCGVEVTSSKVRRERMGHIELVSPVAHIWFLKSLPSRIGALLDMPLKAIENILYSGDFVVIDPVATPFAKGEVISEVVYNQARDAYGEDGFFALTGVEAIKELLTRLDLEAIRATLRNELESTSSEMKRKKVVKRLRLVENFIKSGNRPEWMILTVIPVLPPDLRPLVSLENGRPAVSDLNHHYRTIINRNNRLEKLLKLNPPAIMIRNEKRMLQEAVDALFDSSRRSYVSSRVGSMGYKKSLSDMLKGKQGRFRQNLLGKRVDYSGRSVIVVGPSLKLHQCGLPKKMALELFKPFICSKLKMYGIAPTVKLANKMIQSEKPDVWDVLDEVIKEHPILLNRAPTLHRLGLQAFDPVLIEGKAIQLHPLVCSAFNADFDGDQMAVHVPLSQEAQLEARVLMMSTNNILSPSNGRPIIVPSKDIVLGIYYLTLLEEDPEVREVQTFAEFSHVEYALHEGIVHTCSRIKYRMQKSAADGTVSSEIVETTPGRLILWQIFPQHKDLTFDLINQVLTVKEITSIVDLVYRSCGQRETVEFSDKLMYLGFKYASQSGISFGCKDMIIPDTKAAHVEDASEKIREFSIQYQDGLITKSERYNKVVDEWSKCTDLIARDMMKAISLCDEKGKYNSIYMMANSGARGSASQMKQLAGMRGLMAKPSGEIIETPIISNFREGLSVFEYFNSTHGARKGLADTALKTANSGYLTRRLVDVAQDCTVVEHDCGTSGGVVARAVIEGGVVVATLDSVVLGRVAAVDTYNPVTGEKLFTSGELIDESKLDKIRVAGLDAVKVRSPLTCESKQGICALCYGRDLAIGDLVSIGEAVGVIAAQSVGEPGTQLTMRTFHVGGTAMRGVEVSNLIALMDATVKLVNSNVVTDKYGNQIVMSRSCEVVLLDAAGNEKMRHSVPYGAKLYATEGQSVSMMEKIAEWDPYTIPIITEKTGTIKYVDLIYGVSINEVLDESTGISNRVVVDWKMHLQGANLRPRLVLLDDNGAVVTLSSDLEASYFVPIGAVLNVQDGQRVHAGDVITRIPRGSIKTRDITGGLPRVIELFEARKPKEHAIVSDVDGYVEFGKDYYRSKRRIFIRPVDKSLPVVEYLVPKGKHTIVNEGDFVHKGDLLMDGDPDQHDILRVLGTEALANYMISEIQQVYRLQGVKIDNKHIEVILRQMLQKVEITEPGDTMYLIGEHVSREEVMKLNRKLAEAGKKEVSYVPILQGITKASLDTNSFISAASFQETTKVLTEAAFAGKEDPLYGLKENVIVGRLIPAGTGFIMNKIKKLAMLDQSDYATYYNSELRGIMGDLGSSIIEEFQTPAPDGSISGSVVDY.

The Zn(2+) site is built by C69, C71, C84, and C87. Residues D461, D463, and D465 each coordinate Mg(2+). The Zn(2+) site is built by C805, C879, C886, and C889.

The protein belongs to the RNA polymerase beta' chain family. In terms of assembly, the RNAP catalytic core consists of 2 alpha, 1 beta, 1 beta' and 1 omega subunit. When a sigma factor is associated with the core the holoenzyme is formed, which can initiate transcription. Mg(2+) serves as cofactor. Zn(2+) is required as a cofactor.

It catalyses the reaction RNA(n) + a ribonucleoside 5'-triphosphate = RNA(n+1) + diphosphate. Functionally, DNA-dependent RNA polymerase catalyzes the transcription of DNA into RNA using the four ribonucleoside triphosphates as substrates. In Anaplasma phagocytophilum (strain HZ), this protein is DNA-directed RNA polymerase subunit beta'.